The chain runs to 1194 residues: MGSVMSLGCSKRKATNQDVDSESRKRRKICSTNDAENCRFIQDESSWKHPWSLCANRVISVAAVALTNFRFQQDNQESNSSSLSLPSPATSVSRNWKHDVFPSFHGADVRRTFLSHIMESFRRKGIDTFIDNNIERSKSIGPELKEAIKGSKIAIVLLSRKYASSSWCLDELAEIMKCRQMVGQIVMTIFYEVDPTDIKKQTGEFGKAFTKTCRGKPKEQVERWRKALEDVATIAGYHSHSWRNEADMIEKISTDVSNMLNSFTPSRDFDGLVGMRAHMDMLEQLLRLDLDEVRMIGIWGPPGIGKTTIARFLFNQVSDRFQLSAIMVNIKGCYPRPCFDEYSAQLQLQNQMLSQMINHKDIMISHLGVAQERLRDKKVFLVLDEVDQLGQLDALAKETRWFGPGSRIIITTEDLGVLKAHGINHVYKVEYPSNDEAFQIFCMNAFGQKQPHEGFDEIAWEVTCLAGELPLGLKVLGSALRGKSKREWERTLPRLKTSLDGKIGSIIQFSYDVLCDEDKYLFLYIACLFNGESTTKVKELLGKFLDVKQGLHLLAQKSLISFDGERIHMHTLLEQFGRETSRKQFVHHGFTKRQLLVGARGICEVLDDDTTDSRRFIGIHLELSNTEEELNISEKVLERVHDFHFVRIDASFQPERLQLALQDLIYHSPKIRSLNWYGYESLCLPSTFNPEFLVELDMRSSNLRKLWEGTKQLRNLKWMDLSYSSYLKELPNLSTATNLEELKLRNCSSLVELPSSIEKLTSLQILDLENCSSLEKLPAIENATKLRELKLQNCSSLIELPLSIGTATNLKQLNISGCSSLVKLPSSIGDITDLEVFDLSNCSSLVTLPSSIGNLQNLCKLIMRGCSKLEALPININLKSLDTLNLTDCSQLKSFPEISTHISELRLKGTAIKEVPLSIMSWSPLADFQISYFESLMEFPHAFDIITKLHLSKDIQEVPPWVKRMSRLRDLSLNNCNNLVSLPQLSDSLDYIYADNCKSLERLDCCFNNPEIRLYFPKCFKLNQEARDLIMHTCIDAMFPGTQVPACFIHRATSGDSLKIKLKESPLPTTLRFKACIMLVKVNEELMSYDQTPMIVDIVIRDEHNDLKEKIYPSIYPSIYPLLTEHIYTFELDVEEVTSTELVFEFPQLNKRNWKIGECGILQRETRSLRRSSSPDLSPESSRVSSYDHCLRGD.

Positions 1–27 (MGSVMSLGCSKRKATNQDVDSESRKRR) are disordered. The TIR domain maps to 96–260 (WKHDVFPSFH…KISTDVSNML (165 aa)). 105–110 (HGADVR) provides a ligand contact to NAD(+). Glu171 is an active-site residue. Residues 280–535 (DMLEQLLRLD…ACLFNGESTT (256 aa)) enclose the NB-ARC domain. LRR repeat units follow at residues 623–647 (LSNT…HFVR), 658–681 (QLAL…GYES), 690–713 (PEFL…TKQL), 714–737 (RNLK…STAT), 739–760 (LEEL…IEKL), 761–784 (TSLQ…ENAT), 786–807 (LREL…IGTA), 808–831 (TNLK…IGDI), 832–855 (TDLE…IGNL), 866–878 (CSKL…NINL), 879–899 (KSLD…PEIS), 900–922 (THIS…IMSW), 943–965 (FDII…VKRM), and 966–991 (SRLR…SLDY). The tract at residues 1170–1194 (RRSSSPDLSPESSRVSSYDHCLRGD) is disordered. A compositionally biased stretch (low complexity) spans 1171-1185 (RSSSPDLSPESSRVS).

This sequence belongs to the disease resistance TIR-NB-LRR family.

It catalyses the reaction NAD(+) + H2O = ADP-D-ribose + nicotinamide + H(+). Its function is as follows. TIR-NB-LRR receptor-like protein that confers resistance to the pathogen Hyaloperonospora arabidopsis. Probably acts as a NAD(+) hydrolase (NADase): in response to activation, catalyzes cleavage of NAD(+) into ADP-D-ribose (ADPR) and nicotinamide; NAD(+) cleavage triggering a defense system that promotes cell death. The polypeptide is Probable disease resistance protein RPP1 (Arabidopsis thaliana (Mouse-ear cress)).